The following is a 276-amino-acid chain: Proteasome subunit beta type-8 (276 aa).

The disordered stretch occupies residues 1 to 33 (MALLDVCGAPRGQRPESALPVAGSGRRSDPGHY). The propeptide at 1-72 (MALLDVCGAP…RNVQIEMAHG (72 aa)) is removed in mature form. The residue at position 5 (D5) is a Phosphothreonine. The active-site Nucleophile is the T73.

It belongs to the peptidase T1B family. In terms of assembly, the 26S proteasome consists of a 20S proteasome core and two 19S regulatory subunits. The 20S proteasome core is composed of 28 subunits that are arranged in four stacked rings, resulting in a barrel-shaped structure. The two end rings are each formed by seven alpha subunits, and the two central rings are each formed by seven beta subunits. The catalytic chamber with the active sites is on the inside of the barrel. Component of the immunoproteasome, where it displaces the equivalent housekeeping subunit PSMB5. Component of the spermatoproteasome, a form of the proteasome specifically found in testis. Directly interacts with POMP. Interacts with TAP1. (Microbial infection) Interacts with HIV-1 TAT protein. Post-translationally, autocleaved. The resulting N-terminal Thr residue of the mature subunit is responsible for the nucleophile proteolytic activity.

The protein resides in the cytoplasm. Its subcellular location is the nucleus. It carries out the reaction Cleavage of peptide bonds with very broad specificity.. The proteasome is a multicatalytic proteinase complex which is characterized by its ability to cleave peptides with Arg, Phe, Tyr, Leu, and Glu adjacent to the leaving group at neutral or slightly basic pH. The proteasome has an ATP-dependent proteolytic activity. This subunit is involved in antigen processing to generate class I binding peptides. Replacement of PSMB5 by PSMB8 increases the capacity of the immunoproteasome to cleave model peptides after hydrophobic and basic residues. Involved in the generation of spliced peptides resulting from the ligation of two separate proteasomal cleavage products that are not contiguous in the parental protein. Acts as a major component of interferon gamma-induced sensitivity. Plays a key role in apoptosis via the degradation of the apoptotic inhibitor MCL1. May be involved in the inflammatory response pathway. In cancer cells, substitution of isoform 1 (E2) by isoform 2 (E1) results in immunoproteasome deficiency. Required for the differentiation of preadipocytes into adipocytes. The protein is Proteasome subunit beta type-8 (PSMB8) of Homo sapiens (Human).